We begin with the raw amino-acid sequence, 163 residues long: Ribosome maturation factor RimM (163 aa).

The 69-residue stretch at 94–162 (ADEYYYIDLI…DHLVIAADFI (69 aa)) folds into the PRC barrel domain.

It belongs to the RimM family. In terms of assembly, binds ribosomal protein uS19.

The protein localises to the cytoplasm. In terms of biological role, an accessory protein needed during the final step in the assembly of 30S ribosomal subunit, possibly for assembly of the head region. Essential for efficient processing of 16S rRNA. May be needed both before and after RbfA during the maturation of 16S rRNA. It has affinity for free ribosomal 30S subunits but not for 70S ribosomes. This chain is Ribosome maturation factor RimM, found in Zymomonas mobilis subsp. mobilis (strain ATCC 31821 / ZM4 / CP4).